The sequence spans 517 residues: PSTB2-interacting protein 1 (517 aa).

As to quaternary structure, interacts with PDR17/PSTB2 and SCS2.

Functionally, phosphatidic acid-binding protein involved in interorganelle phosphatidylserine (PtdSer) transport. Linkks a PtdSer donor membrane (via binding of SCS2 and phosphatidic acid present in the donor membrane) with an acceptor membrane (via its interaction with PDR17), forming a zone of apposition that facilitates PtdSer transfer. The protein is PSTB2-interacting protein 1 of Saccharomyces cerevisiae (strain ATCC 204508 / S288c) (Baker's yeast).